The primary structure comprises 99 residues: Apolipoprotein C-III (99 aa).

Residues 1 to 20 (MQPRTLLTVALLALLASARA) form the signal peptide. Methionine 63 carries the post-translational modification Methionine sulfoxide. Residues 68–99 (RFLKGYWSKFTDKFTGFWDSNPEDQPTPAIES) form a lipid-binding region. A glycan (O-linked (GalNAc...) threonine) is linked at threonine 94.

Belongs to the apolipoprotein C3 family. The most abundant glycoforms are characterized by an O-linked disaccharide galactose linked to N-acetylgalactosamine (Gal-GalNAc), further modified with up to 3 sialic acid residues. Less abundant glycoforms are characterized by more complex and fucosylated glycan moieties. O-glycosylated on Thr-94 with a core 1 or possibly core 8 glycan.

Its subcellular location is the secreted. Component of triglyceride-rich very low density lipoproteins (VLDL) and high density lipoproteins (HDL) in plasma. Plays a multifaceted role in triglyceride homeostasis. Intracellularly, promotes hepatic very low density lipoprotein 1 (VLDL1) assembly and secretion; extracellularly, attenuates hydrolysis and clearance of triglyceride-rich lipoproteins (TRLs). Impairs the lipolysis of TRLs by inhibiting lipoprotein lipase and the hepatic uptake of TRLs by remnant receptors. Formed of several curved helices connected via semiflexible hinges, so that it can wrap tightly around the curved micelle surface and easily adapt to the different diameters of its natural binding partners. The polypeptide is Apolipoprotein C-III (Apoc3) (Mus musculus (Mouse)).